Consider the following 189-residue polypeptide: Interferon alpha-7 (189 aa).

Residues 1–23 (MARSFSLLMVVLVLSYKSICSLG) form the signal peptide. 2 disulfide bridges follow: cysteine 24-cysteine 122 and cysteine 52-cysteine 162.

It belongs to the alpha/beta interferon family.

Its subcellular location is the secreted. In terms of biological role, produced by macrophages, IFN-alpha have antiviral activities. Interferon stimulates the production of two enzymes: a protein kinase and an oligoadenylate synthetase. The sequence is that of Interferon alpha-7 (IFNA7) from Homo sapiens (Human).